A 494-amino-acid chain; its full sequence is Autocrine proliferation repressor protein A (494 aa).

The N-terminal stretch at 1-18 (MSKLLILLLLSLVASIFS) is a signal peptide. N-linked (GlcNAc...) asparagine glycans are attached at residues N37, N153, and N302.

The protein belongs to the pqaA family. Interacts with cfaD.

The protein resides in the secreted. Its function is as follows. Inhibitor that slows proliferation of secreting cells (also known as chalone). May function by binding to cell surface receptors. Requires cfaD for activity. Overexpression slows proliferation. This Dictyostelium discoideum (Social amoeba) protein is Autocrine proliferation repressor protein A (aprA).